Here is a 208-residue protein sequence, read N- to C-terminus: Thymidylate kinase (208 aa).

10–17 (GPEGSGKS) lines the ATP pocket.

It belongs to the thymidylate kinase family.

It catalyses the reaction dTMP + ATP = dTDP + ADP. In terms of biological role, phosphorylation of dTMP to form dTDP in both de novo and salvage pathways of dTTP synthesis. In Bacillus cytotoxicus (strain DSM 22905 / CIP 110041 / 391-98 / NVH 391-98), this protein is Thymidylate kinase.